Consider the following 530-residue polypeptide: MSLLNCENSCASSQSSSDCCAAMANSCSAAMKDDSVSGCVSTGNLSSSFMEEIQGYDVEFDPPLESKYECPICLMALREAVQTPCGHRFCKACITKSIRDAGHKCPVDNEILLENQLFPDNFAKREILSLTVKCPNKGCVQKMELRHLEDHQVHCEFALVICPQCQRFFQKCQINKHIIEDCPRRQVSCVNCAVPMPYEEKEIHDQSCPLANIICEYCGTILIREQMPNHYDLDCPTAPVPCTFSVFGCHEKMQRNHLARHLQENTQLHMRLLAQAVHNVNLSLRPCDASSPSRGCRPEDPNYEETVKQLEGRLVRQDHQIRELTAKMETQSMHVSELKRTIRSLEDKVAEMEAQQCNGIYIWKIGNFGMHLKSQEEERPVVIHSPGFYTGRPGYKLCMRLHLQLPTAQRCANYISLFVHTMQGEYDSHLPWPFQGTIRLTILDQSEAVIRQNHEEVMDAKPELLAFQRPTIPRNPKGFGYVTFMHLEALRQGTFIKDDTLLVRCEVSTRFDMGGLRKEGFQPRSTDAGV.

An interaction with TAX1BP1 region spans residues 1–362 (MSLLNCENSC…EAQQCNGIYI (362 aa)). Residues 70 to 109 (CPICLMALREAVQTPCGHRFCKACITKSIRDAGHKCPVDN) form an RING-type; degenerate zinc finger. Lysine 124 participates in a covalent cross-link: Glycyl lysine isopeptide (Lys-Gly) (interchain with G-Cter in SUMO); alternate. Lysine 124 participates in a covalent cross-link: Glycyl lysine isopeptide (Lys-Gly) (interchain with G-Cter in ubiquitin); alternate. Lysine 142 participates in a covalent cross-link: Glycyl lysine isopeptide (Lys-Gly) (interchain with G-Cter in SUMO). 2 consecutive TRAF-type zinc fingers follow at residues 150–202 (DHQV…EEKE) and 203–259 (IHDQ…NHLA). A coiled-coil region spans residues 302 to 356 (NYEETVKQLEGRLVRQDHQIRELTAKMETQSMHVSELKRTIRSLEDKVAEMEAQQ). Residue lysine 327 forms a Glycyl lysine isopeptide (Lys-Gly) (interchain with G-Cter in ubiquitin) linkage. In terms of domain architecture, MATH spans 358-507 (NGIYIWKIGN…DDTLLVRCEV (150 aa)). The tract at residues 363 to 530 (WKIGNFGMHL…FQPRSTDAGV (168 aa)) is interaction with TANK. Residue lysine 461 forms a Glycyl lysine isopeptide (Lys-Gly) (interchain with G-Cter in SUMO) linkage.

It belongs to the TNF receptor-associated factor family. A subfamily. Homotrimer. Homooligomer. N-terminal region is dimeric while C-terminal region is trimeric; maybe providing a mode of oligomerization. Upon IL1B treatment, forms a complex with PELI1, IRAK1, IRAK4 and MYD88; this complex recruits MAP3K7/TAK1, TAB1 and TAB2 to mediate NF-kappa-B activation. Direct binding of SMAD6 to PELI1 prevents the complex formation and hence negatively regulates IL1R-TLR signaling and eventually NF-kappa-B-mediated gene expression. Binds to TNFRSF5/CD40 and TNFRSF11A/RANK. Associates with NGFR, TNFRSF17, IRAK2, IRAK3, RIPK2, MAP3K1, MAP3K5, MAP3K14, CSK, TRAF, TRAF-interacting protein TRIP and TNF receptor associated protein TDP2. Interacts with IL17R. Interacts with SQSTM1 bridging NTRK1 and NGFR. Forms a ternary complex with SQSTM1 and PRKCZ. Interacts with PELI2 and PELI3. Binds UBE2V1. Interacts with TAX1BP1; this interaction mediates deubiquitination of TRAF6 and inhibition of NF-kappa-B activation. Interacts with ZNF675. Interacts with ARRB1 and ARRB2. Interacts with MAP3K7 and TAB1/MAP3K7IP1; during IL-1 signaling. Interacts with UBE2N. Interacts with TGFBR1, HDAC1 and RANGAP1. Interacts with AKT1, AKT2 and AKT3. Interacts (via TRAF domains) with NUMBL (via C-terminal). Interacts with RBCK1. Interacts with LIMD1 (via LIM domains). Interacts with RSAD2/viperin. Interacts (via C-terminus) with EIF2AK2/PKR (via the kinase catalytic domain). Interacts with ZFAND5. Interacts with IL1RL1. Interacts with TRAFD1. Interacts with AJUBA. Interacts with MAVS/IPS1. Interacts (via TRAF domains) with DYNC2I2 (via WD domains). Interacts with IFIT3 (via N-terminus). Interacts with TICAM2. Interacts with CARD14. Interacts with CD40 and MAP3K8; the interaction is required for ERK activation. Interacts with TICAM1 and this interaction is enhanced in the presence of WDFY1. Interacts with TANK; this interaction increases in response to DNA damage. Interacts with USP10; this interaction increases in response to DNA damage. Interacts with ZC3H12A; this interaction increases in response to DNA damage and is stimulated by TANK. Interacts with WDFY3. Interacts with TRIM13. Interacts with GPS2. Interacts (via C-terminus) with SASH1. Interacts with LRRC19. Interacts with IL17RA and TRAF3IP2. Interacts with TOMM70. Interacts with AMBRA1; interaction is required to mediate 'Lys-63'-linked ubiquitination of ULK1. Interacts with CRBN; this interaction inhibits TLR4-mediated signaling by preventing TRAF6-mediated ubiquitination of ECSIT. Sumoylated on Lys-124, Lys-142 and Lys-461 with SUMO1. In terms of processing, polyubiquitinated on Lys-124 by TRAF3IP2; after cell stimulation with IL17A. Polyubiquitinated; after cell stimulation with IL1B or TGFB. This ligand-induced cell stimulation leads to dimerization/oligomerization of TRAF6 molecules, followed by auto-ubiquitination which involves UBE2N and UBE2V1 and leads to TRAF6 activation. This 'Lys-63' site-specific poly-ubiquitination appears to be associated with the activation of signaling molecules. Endogenous autoubiquitination occurs only for the cytoplasmic form. Deubiquitinated by USP10 in a TANK-dependent manner, leading to the negative regulation of NF-kappa-B signaling upon DNA damage. LRRC19 induces 'Lys-63' ubiquitination. Ubiquitinated at Lys-327 by the SCF(FBXL2) complex, leading to its degradation by the proteasome.

The protein resides in the cytoplasm. The protein localises to the cell cortex. It localises to the nucleus. Its subcellular location is the lipid droplet. It catalyses the reaction S-ubiquitinyl-[E2 ubiquitin-conjugating enzyme]-L-cysteine + [acceptor protein]-L-lysine = [E2 ubiquitin-conjugating enzyme]-L-cysteine + N(6)-ubiquitinyl-[acceptor protein]-L-lysine.. It participates in protein modification; protein ubiquitination. In terms of biological role, E3 ubiquitin ligase that, together with UBE2N and UBE2V1, mediates the synthesis of 'Lys-63'-linked-polyubiquitin chains conjugated to proteins, such as ECSIT, IKBKG, IRAK1, AKT1 and AKT2. Also mediates ubiquitination of free/unanchored polyubiquitin chain that leads to MAP3K7 activation. Leads to the activation of NF-kappa-B and JUN. Seems to also play a role in dendritic cells (DCs) maturation and/or activation. Represses c-Myb-mediated transactivation, in B-lymphocytes. Adapter protein that seems to play a role in signal transduction initiated via TNF receptor, IL-1 receptor and IL-17 receptor. Regulates osteoclast differentiation by mediating the activation of adapter protein complex 1 (AP-1) and NF-kappa-B, in response to RANK-L stimulation. Together with MAP3K8, mediates CD40 signals that activate ERK in B-cells and macrophages, and thus may play a role in the regulation of immunoglobulin production. Acts as a regulator of the JNK and NF-kappa-B signaling pathways by initiating assembly of heterotypic 'Lys-63'-/'Lys-48'-linked branched ubiquitin chains that are then recognized by TAB2: TRAF6 catalyzes initial 'Lys-63'-linked-polyubiquitin chains that are then branched via 'Lys-48'-linked polyubiquitin by HUWE1. 'Lys-63'-/'Lys-48'-linked branched ubiquitin chains protect 'Lys-63'-linkages from CYLD deubiquitination. Also participates in the TCR signaling by ubiquitinating LAT. In Rattus norvegicus (Rat), this protein is TNF receptor-associated factor 6 (Traf6).